The chain runs to 315 residues: Ankyrin repeat domain-containing protein 54 (315 aa).

Positions Met-1–Ala-49 are disordered. ANK repeat units follow at residues His-124–Ala-153, Lys-157–Gln-186, Leu-190–Ala-219, and Ala-223–Gln-255.

It localises to the nucleus. The protein localises to the cytoplasm. The protein resides in the midbody. Plays an important role in regulating intracellular signaling events associated with erythroid terminal differentiation. In Danio rerio (Zebrafish), this protein is Ankyrin repeat domain-containing protein 54 (ankrd54).